We begin with the raw amino-acid sequence, 535 residues long: MVKKVAVIGAGVSGLISLKGCVDEGLEPTCFERTEDIGGLWRFKENVEDGRASIYHSVITNTSKEMSCFSDFPMPEDFPNFLHNSKLLEYFRIFAKKFDLLKYIQFQTTVISVKKRPDFASSGQWDVYVQSNGKEQRAVFDAVMVCSGHHIQPHLPLKSFPGIERFQGQYFHSRQYKHPVGYEGKRILVVGIGNSAADIASELSKRAAQVFVSTRHGSWVLSRISEDGYPWDMVFHTRFSSMLRNVLPRTVVKWMMERQMNRWFNHENYGLVPQNKYLMKEPVLNDDLPSRLLYGAIKVKTRVKELTETAVVFEDGTVEEDVDVIVFATGYTFSFPFLEDSLVKVEDNKVSLYKAMFPPHLEKPTLACIGLIQPLGSIFPTVELQARWATRVFKGVCRLPSETTMMADIAERNEKRIDLFGKSQSQILQTNYIDYLDELALEIGAKPDFISLLFKDPKLAVKLYFGPCNSYQYRLVGPGQWEGARNAILTQKQRILKPLKTRTLQTSASAPVSFLIKVLGLLAIVLAFFFKLHGF.

FAD contacts are provided by residues 9 to 13 (GAGVS), glutamate 32, 40 to 41 (LW), and 61 to 62 (NT). NADP(+)-binding positions include 60-61 (TN) and 195-198 (SAAD). Lysine 492 is covalently cross-linked (Glycyl lysine isopeptide (Lys-Gly) (interchain with G-Cter in SUMO)). A helical membrane pass occupies residues 510–530 (APVSFLIKVLGLLAIVLAFFF).

The protein belongs to the FMO family. FAD is required as a cofactor. Mg(2+) serves as cofactor.

The protein resides in the microsome membrane. Its subcellular location is the endoplasmic reticulum membrane. Its function is as follows. Catalyzes the oxidative metabolism of numerous xenobiotics, including mainly therapeutic drugs and insecticides that contain a soft nucleophile, most commonly nitrogen and sulfur and participates to their bioactivation. This Rattus norvegicus (Rat) protein is Dimethylaniline monooxygenase [N-oxide-forming] 2.